The chain runs to 63 residues: MRYTACTESGQNQCICEGNDVCGQGRNCQFDSSGKKCVEGEGTRKPQNEGQHDFDPIPEEYLS.

Residues 1–3 (MRY) are interaction with thrombin active site. Disulfide bonds link Cys-6-Cys-14, Cys-16-Cys-28, and Cys-22-Cys-37. Residues 35–55 (KKCVEGEGTRKPQNEGQHDFD) show a composition bias toward basic and acidic residues. Positions 35 to 63 (KKCVEGEGTRKPQNEGQHDFDPIPEEYLS) are disordered. O-linked (GalNAc...) threonine glycosylation is present at Thr-43. Residues 53–63 (DFDPIPEEYLS) form an interaction with fibrinogen-binding exosite of thrombin region. A Sulfotyrosine modification is found at Tyr-61.

This sequence belongs to the protease inhibitor I14 (hirudin) family. In terms of processing, O-linked glycan consists of Fuc-Gal-GalNAc trisaccharide.

It localises to the secreted. Functionally, hirudin is a potent thrombin-specific protease inhibitor. It forms a stable non-covalent complex with alpha-thrombin, thereby abolishing its ability to cleave fibrinogen. The polypeptide is Hirudin-P6 (Hirudinaria manillensis (Asian medical leech)).